Reading from the N-terminus, the 281-residue chain is Aldo-keto reductase MAP_3007 (281 aa).

The active-site Proton donor is Tyr-56. 7 residues coordinate NADPH: Leu-196, Ile-234, Arg-236, Ser-237, Ala-238, Ser-245, and Arg-272.

This sequence belongs to the aldo/keto reductase family.

The protein is Aldo-keto reductase MAP_3007 of Mycolicibacterium paratuberculosis (strain ATCC BAA-968 / K-10) (Mycobacterium paratuberculosis).